Here is a 158-residue protein sequence, read N- to C-terminus: Transcription elongation factor GreA (158 aa).

Positions 4–70 form a coiled coil; sequence QKQYPMTQEG…IEQDIQRIEH (67 aa).

This sequence belongs to the GreA/GreB family.

Necessary for efficient RNA polymerase transcription elongation past template-encoded arresting sites. The arresting sites in DNA have the property of trapping a certain fraction of elongating RNA polymerases that pass through, resulting in locked ternary complexes. Cleavage of the nascent transcript by cleavage factors such as GreA or GreB allows the resumption of elongation from the new 3'terminus. GreA releases sequences of 2 to 3 nucleotides. This chain is Transcription elongation factor GreA, found in Staphylococcus aureus (strain Mu3 / ATCC 700698).